A 662-amino-acid chain; its full sequence is PsbB mRNA maturation factor Mbb1, chloroplastic (662 aa).

The transit peptide at 1 to 50 directs the protein to the chloroplast; sequence MSLVPFSQLWRGVRTRGPVEQASSSSSSSSSSRRTWYAPARSQTGVQVAA. 2 disordered regions span residues 14–38 and 75–101; these read RTRGPVEQASSSSSSSSSSRRTWYA and IIADLSSSGSGDGEGERGDATGSRDEA. Positions 23–32 are enriched in low complexity; sequence SSSSSSSSSS. Residues 88-101 show a composition bias toward basic and acidic residues; it reads EGERGDATGSRDEA. TPR repeat units lie at residues 126–160, 161–194, 196–229, 231–263, 269–302, 305–338, 339–372, 373–406, 408–440, and 444–477; these read SRIRARQTLDLNERKSLYKAAEDGLRRCLALDPAD, PRAYVVLGKTLVQQKRYDEARQLYQDGCANTGNV, PYIWSAWGWLEARTGNVERARKLYDAAVVVDGTH, CAWHKWGMLEKGQGNFTRARDLWMQGIQRCRRK, AYLYNALGCMAAQLGRVGEARSWFEEGTRSAEGA, VALWQAWAVLEAKQGDPTVVRYLFRKALGANPRS, RYVHLAWALWERRQGNPQHCLALLRRGCELNPTD, PALYQAWALVEKQAGRIERARELFEQGLRADPSD, YMWQAYGVMEAEQGNMDRARQLFQEGVWADPRS, and VYVFHAWGALEWQAGNVQTARELFKAAVRVDPKS. Disordered stretches follow at residues 540–563 and 598–662; these read SDGNGSSSSNGGAGGQQAGSEAAA and LPDF…RSMG.

In terms of assembly, part of a 300 kDa complex that associates with RNA.

It is found in the plastid. The protein localises to the chloroplast stroma. Involved, directly or indirectly, in the processing of the chloroplast encoded psbB mRNA to its mature form, acting via the 5'-UTR of the psbB mRNA. This is PsbB mRNA maturation factor Mbb1, chloroplastic (MBB1) from Chlamydomonas reinhardtii (Chlamydomonas smithii).